Consider the following 106-residue polypeptide: Iron-sulfur cluster assembly protein CyaY (106 aa).

It belongs to the frataxin family.

Involved in iron-sulfur (Fe-S) cluster assembly. May act as a regulator of Fe-S biogenesis. The sequence is that of Iron-sulfur cluster assembly protein CyaY from Escherichia coli O139:H28 (strain E24377A / ETEC).